The primary structure comprises 108 residues: T-cell acute lymphocytic leukemia protein 2 homolog (108 aa).

The bHLH domain maps to 2–54 (TRKIFTNTRERWRQQSVNNAFAKLRKLIPTHPPDKKLSKNETLRLAMRYINFL). A disordered region spans residues 76 to 108 (GLFPPKTRLPDEDDRTLLNDYRVPSPGPSHGAP).

The chain is T-cell acute lymphocytic leukemia protein 2 homolog (Tal2) from Mus musculus (Mouse).